The chain runs to 273 residues: 2,3,4,5-tetrahydropyridine-2,6-dicarboxylate N-succinyltransferase (273 aa).

It belongs to the transferase hexapeptide repeat family.

Its subcellular location is the cytoplasm. It catalyses the reaction (S)-2,3,4,5-tetrahydrodipicolinate + succinyl-CoA + H2O = (S)-2-succinylamino-6-oxoheptanedioate + CoA. Its pathway is amino-acid biosynthesis; L-lysine biosynthesis via DAP pathway; LL-2,6-diaminopimelate from (S)-tetrahydrodipicolinate (succinylase route): step 1/3. This is 2,3,4,5-tetrahydropyridine-2,6-dicarboxylate N-succinyltransferase from Bordetella petrii (strain ATCC BAA-461 / DSM 12804 / CCUG 43448).